The primary structure comprises 406 residues: Probable peptidoglycan glycosyltransferase FtsW (406 aa).

The next 9 helical transmembrane spans lie at 22-42 (LWFV…VASA), 56-76 (FFMG…FMML), 86-106 (WGIL…VPGI), 116-136 (WINL…CMVV), 153-173 (LIGF…LLME), 186-206 (VIAL…IVIM), 280-300 (IWVE…FALM), 318-338 (FAGY…IINV), and 352-372 (LPLI…LFVV). A compositionally biased stretch (basic and acidic residues) spans 383 to 397 (SKGGESEERKRKSDE). Positions 383–406 (SKGGESEERKRKSDESIDDGEALA) are disordered.

This sequence belongs to the SEDS family. FtsW subfamily.

Its subcellular location is the cell inner membrane. The enzyme catalyses [GlcNAc-(1-&gt;4)-Mur2Ac(oyl-L-Ala-gamma-D-Glu-L-Lys-D-Ala-D-Ala)](n)-di-trans,octa-cis-undecaprenyl diphosphate + beta-D-GlcNAc-(1-&gt;4)-Mur2Ac(oyl-L-Ala-gamma-D-Glu-L-Lys-D-Ala-D-Ala)-di-trans,octa-cis-undecaprenyl diphosphate = [GlcNAc-(1-&gt;4)-Mur2Ac(oyl-L-Ala-gamma-D-Glu-L-Lys-D-Ala-D-Ala)](n+1)-di-trans,octa-cis-undecaprenyl diphosphate + di-trans,octa-cis-undecaprenyl diphosphate + H(+). It participates in cell wall biogenesis; peptidoglycan biosynthesis. Functionally, peptidoglycan polymerase that is essential for cell division. The chain is Probable peptidoglycan glycosyltransferase FtsW from Marinomonas mediterranea (strain ATCC 700492 / JCM 21426 / NBRC 103028 / MMB-1).